The sequence spans 199 residues: Protein-methionine-sulfoxide reductase heme-binding subunit MsrQ (199 aa).

4 helical membrane-spanning segments follow: residues 8 to 28 (IIWL…WLFW), 82 to 102 (LWCF…ELGI), 116 to 136 (PYLT…LTST), and 153 to 173 (VVYL…KVLS).

It belongs to the MsrQ family. Heterodimer of a catalytic subunit (MsrP) and a heme-binding subunit (MsrQ). The cofactor is FMN. Heme b is required as a cofactor.

It is found in the cell inner membrane. In terms of biological role, part of the MsrPQ system that repairs oxidized periplasmic proteins containing methionine sulfoxide residues (Met-O), using respiratory chain electrons. Thus protects these proteins from oxidative-stress damage caused by reactive species of oxygen and chlorine generated by the host defense mechanisms. MsrPQ is essential for the maintenance of envelope integrity under bleach stress, rescuing a wide series of structurally unrelated periplasmic proteins from methionine oxidation, including the primary periplasmic chaperone SurA and the lipoprotein Pal. MsrQ provides electrons for reduction to the reductase catalytic subunit MsrP, using the quinone pool of the respiratory chain. In Salmonella arizonae (strain ATCC BAA-731 / CDC346-86 / RSK2980), this protein is Protein-methionine-sulfoxide reductase heme-binding subunit MsrQ.